A 381-amino-acid chain; its full sequence is Odorant receptor 46a, isoform A (381 aa).

The Cytoplasmic segment spans residues 1–37; the sequence is MSKGVEIFYKGQKAFLNILSLWPQIERRWRIIHQVNY. The helical transmembrane segment at 38-58 threads the bilayer; it reads VHVIVFWVLLFDLLLVLHVMA. Residue asparagine 59 is glycosylated (N-linked (GlcNAc...) asparagine). At 59 to 65 the chain is on the extracellular side; sequence NLSYMSE. Residues 66-86 traverse the membrane as a helical segment; the sequence is VVKAIFILATSAGHTTKLLSI. Residues 87 to 127 are Cytoplasmic-facing; the sequence is KANNVQMEELFRRLDNEEFRPRGANEELIFAAACERSRKLR. A helical transmembrane segment spans residues 128–148; the sequence is DFYGALSFAALSMILIPQFAL. The Extracellular segment spans residues 149–170; that stretch reads DWSHLPLKTYNPLGENTGSPAY. A helical transmembrane segment spans residues 171–191; the sequence is WLLYCYQCLALSVSCITNIGF. Topologically, residues 192 to 255 are cytoplasmic; that stretch reads DSLCSSLFIF…KTVERLLCKP (64 aa). The helical transmembrane segment at 256-276 threads the bilayer; that stretch reads ISVQIFCSVLVLTANFYAIAV. At 277–287 the chain is on the extracellular side; it reads LSDERLELFKY. The chain crosses the membrane as a helical span at residues 288–308; the sequence is VTYQACMLIQIFILCYYAGEV. At 309-355 the chain is on the cytoplasmic side; sequence TQRSLDLPHELYKTSWVDWDYRSRRIALLFMQRLHSTLRIRTLNPSL. A helical membrane pass occupies residues 356–376; it reads GFDLMLFSSIVNCSYSYFALL. The Extracellular segment spans residues 377-381; that stretch reads KRVNS.

It belongs to the insect chemoreceptor superfamily. Heteromeric odorant receptor channel (TC 1.A.69) family. Or2a subfamily. As to quaternary structure, interacts with Orco. Complexes exist early in the endomembrane system in olfactory sensory neurons (OSNs), coupling these complexes to the conserved ciliary trafficking pathway. As to expression, isoform A is expressed in a subset of 17 olfactory receptor neurons in the maxillary palp.

It is found in the cell membrane. In terms of biological role, odorant receptor which mediates acceptance or avoidance behavior, depending on its substrates. The odorant receptor repertoire encodes a large collection of odor stimuli that vary widely in identity, intensity, and duration. May form a complex with Orco to form odorant-sensing units, providing sensitive and prolonged odorant signaling and calcium permeability. The protein is Odorant receptor 46a, isoform A (Or46a) of Drosophila melanogaster (Fruit fly).